We begin with the raw amino-acid sequence, 209 residues long: LexA repressor (209 aa).

The H-T-H motif DNA-binding region spans 30-50 (RVEIAREIGFKSPNAAEEHLK). Active-site for autocatalytic cleavage activity residues include Ser126 and Lys163.

This sequence belongs to the peptidase S24 family. As to quaternary structure, homodimer.

The enzyme catalyses Hydrolysis of Ala-|-Gly bond in repressor LexA.. Functionally, represses a number of genes involved in the response to DNA damage (SOS response), including recA and lexA. In the presence of single-stranded DNA, RecA interacts with LexA causing an autocatalytic cleavage which disrupts the DNA-binding part of LexA, leading to derepression of the SOS regulon and eventually DNA repair. This chain is LexA repressor, found in Glaesserella parasuis serovar 5 (strain SH0165) (Haemophilus parasuis).